Consider the following 64-residue polypeptide: Micrurotoxin 1 (64 aa).

5 disulfides stabilise this stretch: cysteine 3–cysteine 24, cysteine 6–cysteine 11, cysteine 17–cysteine 41, cysteine 45–cysteine 57, and cysteine 58–cysteine 63.

This sequence belongs to the three-finger toxin family. Ancestral subfamily. In terms of tissue distribution, expressed by the venom gland.

The protein resides in the secreted. Allosteric modulator of the GABA(A) receptor (GABR), possibly increasing receptor affinity for the agonist, thus enhancing receptor opening and macroscopic desensitization. In vivo, intracerebroventricular injection into mice results in periods of reduced basal activity, followed by bursts of intense seizures and death. This Micrurus mipartitus (Red-tailed coral snake) protein is Micrurotoxin 1.